The chain runs to 724 residues: Semaphorin-2A (724 aa).

The first 25 residues, Met1–Ala25, serve as a signal peptide directing secretion. In terms of domain architecture, Sema spans Gln45–Leu522. The N-linked (GlcNAc...) asparagine glycan is linked to Asn95. A disulfide bridge connects residues Cys118 and Cys129. Asn163, Asn190, Asn229, and Asn314 each carry an N-linked (GlcNAc...) asparagine glycan. 2 disulfides stabilise this stretch: Cys291/Cys399 and Cys315/Cys358. An N-linked (GlcNAc...) asparagine glycan is attached at Asn401. 2 cysteine pairs are disulfide-bonded: Cys525-Cys541 and Cys535-Cys550. The region spanning Pro552–Ala663 is the Ig-like C2-type domain. Asn563 carries an N-linked (GlcNAc...) asparagine glycan. Cys590 and Cys647 are disulfide-bonded. 3 N-linked (GlcNAc...) asparagine glycosylation sites follow: Asn658, Asn670, and Asn708.

Belongs to the semaphorin family. In terms of assembly, interacts with PlexB. As to expression, transiently expressed by a single large muscle during motoneuron outgrowth and synapse formation.

Its subcellular location is the secreted. Functionally, ligand for transmembrane receptor PlexB. Plays a role in growth cone guidance. Required for both proper adult behavior and survival. Can function as a selective target-derived signal that inhibits the formation of specific synaptic terminal arbors. Function in neurons is essential for adult survival, motor neuron survival, and is important for climbing behavior and activity. During embryogenesis, plays an important role in correct salivary gland positioning. The polypeptide is Semaphorin-2A (Drosophila melanogaster (Fruit fly)).